We begin with the raw amino-acid sequence, 149 residues long: Calmodulin (149 aa).

N-acetylalanine is present on Ala-2. EF-hand domains follow at residues 8 to 43 (EQIAEFKEAFSLFDKDGDGTITTKELGTVMRSLGQN), 44 to 79 (PTEAELQDMINEVDADGNGTIDFPEFLSLMARKMKD), 81 to 116 (DTEEELIEAFKVFDRDGNGFISAAELRHVMTNLGEK), and 117 to 149 (LTDEEVDEMIREADVDGDGQINYEEFVKMMMAK). The Ca(2+) site is built by Asp-21, Asp-23, Asp-25, Thr-27, Glu-32, Asp-57, Asp-59, Asn-61, Thr-63, Glu-68, Asp-94, Asp-96, Asn-98, and Glu-105. The residue at position 116 (Lys-116) is an N6,N6,N6-trimethyllysine. Asp-130, Asp-132, Asp-134, Gln-136, and Glu-141 together coordinate Ca(2+).

It belongs to the calmodulin family.

Its function is as follows. Calmodulin mediates the control of a large number of enzymes, ion channels and other proteins by Ca(2+). Among the enzymes to be stimulated by the calmodulin-Ca(2+) complex are a number of protein kinases and phosphatases. The sequence is that of Calmodulin from Karlodinium veneficum (Dinoflagellate).